Consider the following 621-residue polypeptide: Phosphoenolpyruvate carboxykinase [GTP] (621 aa).

Residues arginine 83 and 217–219 (YGG) each bind substrate. Residues lysine 226 and histidine 245 each contribute to the Mn(2+) site. Serine 267 provides a ligand contact to substrate. 268 to 273 (MCGKTS) serves as a coordination point for GTP. Cysteine 269 is an active-site residue. Aspartate 286 is a Mn(2+) binding site. Residue 381-383 (NAR) participates in substrate binding. Arginine 383 and arginine 415 together coordinate GTP.

It belongs to the phosphoenolpyruvate carboxykinase [GTP] family. Requires Mn(2+) as cofactor.

The protein resides in the cytoplasm. It carries out the reaction oxaloacetate + GTP = phosphoenolpyruvate + GDP + CO2. The protein operates within carbohydrate biosynthesis; gluconeogenesis. Functionally, catalyzes the conversion of oxaloacetate (OAA) to phosphoenolpyruvate (PEP), the rate-limiting step in the metabolic pathway that produces glucose from lactate and other precursors derived from the citric acid cycle. The sequence is that of Phosphoenolpyruvate carboxykinase [GTP] from Pyrococcus horikoshii (strain ATCC 700860 / DSM 12428 / JCM 9974 / NBRC 100139 / OT-3).